We begin with the raw amino-acid sequence, 388 residues long: 1-deoxy-D-xylulose 5-phosphate reductoisomerase (388 aa).

7 residues coordinate NADPH: Thr-13, Gly-14, Ser-15, Ile-16, Arg-40, Asn-41, and Asn-124. Residue Lys-125 participates in 1-deoxy-D-xylulose 5-phosphate binding. Residue Glu-126 coordinates NADPH. Asp-150 is a Mn(2+) binding site. 1-deoxy-D-xylulose 5-phosphate contacts are provided by Ser-151, Glu-152, Ser-176, and His-199. Position 152 (Glu-152) interacts with Mn(2+). Gly-205 contacts NADPH. Residues Ser-212, Asn-217, Lys-218, and Glu-221 each contribute to the 1-deoxy-D-xylulose 5-phosphate site. Residue Glu-221 participates in Mn(2+) binding.

Belongs to the DXR family. In terms of assembly, homodimer. It depends on Mg(2+) as a cofactor. Mn(2+) is required as a cofactor. The cofactor is Co(2+).

It catalyses the reaction 2-C-methyl-D-erythritol 4-phosphate + NADP(+) = 1-deoxy-D-xylulose 5-phosphate + NADPH + H(+). The protein operates within isoprenoid biosynthesis; isopentenyl diphosphate biosynthesis via DXP pathway; isopentenyl diphosphate from 1-deoxy-D-xylulose 5-phosphate: step 1/6. Competitively inhibited by the antibiotic fosmidomycin. In terms of biological role, catalyzes the NADPH-dependent rearrangement and reduction of 1-deoxy-D-xylulose-5-phosphate (DXP) to 2-C-methyl-D-erythritol 4-phosphate (MEP). Cannot use NADH instead of NADPH as the reducing agent. The sequence is that of 1-deoxy-D-xylulose 5-phosphate reductoisomerase from Zymomonas mobilis subsp. mobilis (strain ATCC 31821 / ZM4 / CP4).